A 450-amino-acid polypeptide reads, in one-letter code: Beclin-1 (450 aa).

An N-acetylmethionine modification is found at Met-1. Residues Ser-15 and Ser-30 each carry the phosphoserine modification. The tract at residues 48–72 (TTAQAKPGETQEEETNSGEEPFIET) is disordered. A phosphoserine; by AMPK mark is found at Ser-90, Ser-93, and Ser-96. The BH3 motif lies at 108 to 127 (TMENLSRRLKVTGDLFDIMS). The interaction with BCL2 and BCL2L1 isoform Bcl-X(L) stretch occupies residues 112-159 (LSRRLKVTGDLFDIMSGQTDVDHPLCEECTDTLLDQLDTQLNVTENEC). Thr-119 bears the Phosphothreonine; by DAPK1 mark. Residues 142–270 (DTLLDQLDTQ…LDKLKKTNVF (129 aa)) are a coiled coil. The segment at 245–450 (DELKSVENQM…AWVSSQFYNK (206 aa)) is evolutionary conserved domain (ECD). Residues Lys-402 and Lys-437 each participate in a glycyl lysine isopeptide (Lys-Gly) (interchain with G-Cter in ubiquitin) cross-link. The segment at 425–450 (WTKALKFMLTNLKWGLAWVSSQFYNK) is required for membrane-association.

Belongs to the beclin family. As to quaternary structure, a homodimeric form is proposed to exist; this metastable form readily transits to ATG14- or UVRAG-containing complexes with BECN1:UVRAG being more stable than BECN1:ATG14. Component of the PI3K (PI3KC3/PI3K-III/class III phosphatidylinositol 3-kinase) complex the core of which is composed of the catalytic subunit PIK3C3, the regulatory subunit PIK3R4 and BECN1 associating with additional regulatory/auxiliary subunits to form alternative complex forms. Alternative complex forms containing a fourth regulatory subunit in a mutually exclusive manner are PI3K complex I (PI3KC3-C1) containing ATG14, and PI3K complex II (PI3KC3-C2) containing UVRAG. PI3KC3-C1 displays a V-shaped architecture with PIK3R4 serving as a bridge between PIK3C3 and the ATG14:BECN1 subcomplex. Both, PI3KC3-C1 and PI3KC3-C2, can associate with further regulatory subunits, such as RUBCN, SH3GLB1/Bif-1 and AMBRA1. PI3KC3-C1 probably associates with PIK3CB. Forms a complex with PPP2CA and AMBRA1; AMBRA1 and BECN1 components of the complex regulate MYC stability via different pathways. Component of the complex, at least composed of LRPPRC, BECN1 and BCL2; the interactions prevent BECN1 from forming an autophagy-inducing complex with PIK3C3. Interacts with AMBRA1, GOPC, GRID2. Interacts with BCL2 and BCL2L1 isoform Bcl-X(L); the interaction inhibits BECN1 function in promoting autophagy by interfering with the formation of the PI3K complex. Interacts with cytosolic HMGB1; inhibits the interaction of BECN1 and BCL2 leading to promotion of autophagy. Interacts with USP10, USP13, VMP1, DAPK1, RAB39A. Interacts with the poly-Gln domain of ATXN3; the interaction causes deubiquitination at Lys-402 and stabilizes BECN1. Interacts with SLAMF1. Interacts with TRIM5; the interaction causes activation of BECN1 by causing its dissociation from its inhibitors BCL2 and TAB2. Interacts with active ULK1 (phosphorylated on 'Ser-317') and MEFV simultaneously. Interacts with WDR81 and WDR91; negatively regulates the PI3 kinase/PI3K activity associated with endosomal membranes. Interacts with LAPTM4B; competes with EGFR for LAPTM4B binding; regulates EGFR activity. Interacts with TRIM50. Interacts with TRIM16. Interacts with ATG14; this interaction is increased in the absence of TMEM39A. Interacts with WASHC1; preventing interaction with AMBRA1 and the DCX(AMBRA1) complex and subsequent ubiquitination. Interacts with TRIM17. Interacts with BCL2L10/BCL-B (via BH1 domain). Interacts with SH3BGRL. Interacts with IRGM; enhancing BECN1-interacting partners and influencing the composition of the BECN1 complex. Interacts with ARMC3. Interacts with LRPPRC. In terms of assembly, (Microbial infection) Interacts with human cytomegalovirus/HHV-5 protein TRS1. (Microbial infection) Interacts with murine gammaherpesvirus 68 M11. As to quaternary structure, (Microbial infection) Interacts with herpes simplex virus 1 (HHV-1) protein ICP34.5; this interaction antagonizes the host autophagy response. In terms of assembly, (Microbial infection) Interacts with Epstein-Barr virus protein BHRF1; this interaction inhibits BECN1-mediated autophagy induction. In terms of processing, phosphorylation at Thr-119 by DAPK1 reduces its interaction with BCL2 and BCL2L1 and promotes induction of autophagy. In response to autophagic stimuli, phosphorylated at serine residues by AMPK in an ATG14-dependent manner, and this phosphorylation is critical for maximally efficient autophagy. Post-translationally, polyubiquitinated by NEDD4, both with 'Lys-11'- and 'Lys-63'-linkages. 'Lys-11'-linked polyubiquitination leads to degradation and is enhanced when the stabilizing interaction partner VPS34 is depleted. Deubiquitinated by USP10 and USP13, leading to stabilize the PIK3C3/VPS34-containing complexes. Polyubiquitinated at Lys-402 with 'Lys-48'-linkages. 'Lys-48'-linked polyubiquitination of Lys-402 leads to degradation. Deubiquitinated by ATXN3, leading to stabilization. Ubiquitinated at Lys-437 via 'Lys-63'-linkage by the DCX(AMBRA1) complex, thereby increasing the association between BECN1 and PIK3C3 to promote PIK3C3 activity. 'Lys-48'-linked ubiquitination by RNF216 leads to proteasomal degradation and autophagy inhibition. Proteolytically processed by caspases including CASP8 and CASP3; the C-terminal fragments lack autophagy-inducing capacity and are proposed to induce apoptosis. Thus the cleavage is proposed to be an determinant to switch from autophagy to apoptosis pathways affecting cellular homeostasis including viral infections and survival of tumor cells. In terms of tissue distribution, ubiquitous.

Its subcellular location is the cytoplasm. The protein resides in the golgi apparatus. It is found in the trans-Golgi network membrane. The protein localises to the endosome membrane. It localises to the endoplasmic reticulum membrane. Its subcellular location is the mitochondrion membrane. The protein resides in the endosome. It is found in the cytoplasmic vesicle. The protein localises to the autophagosome. It localises to the mitochondrion. Its subcellular location is the nucleus. Its function is as follows. Plays a central role in autophagy. Acts as a core subunit of the PI3K complex that mediates formation of phosphatidylinositol 3-phosphate; different complex forms are believed to play a role in multiple membrane trafficking pathways: PI3KC3-C1 is involved in initiation of autophagosomes and PI3KC3-C2 in maturation of autophagosomes and endocytosis. Involved in regulation of degradative endocytic trafficking and required for the abscission step in cytokinesis, probably in the context of PI3KC3-C2. Essential for the formation of PI3KC3-C2 but not PI3KC3-C1 PI3K complex forms. Involved in endocytosis. May play a role in antiviral host defense. In terms of biological role, beclin-1-C 35 kDa localized to mitochondria can promote apoptosis; it induces the mitochondrial translocation of BAX and the release of proapoptotic factors. (Microbial infection) Protects against infection by a neurovirulent strain of Sindbis virus. The sequence is that of Beclin-1 (BECN1) from Homo sapiens (Human).